A 288-amino-acid polypeptide reads, in one-letter code: Lipoyl synthase (288 aa).

Residues C39, C44, C50, C65, C69, C72, and S276 each coordinate [4Fe-4S] cluster. The region spanning 51–265 (WGKGTATFMI…KETGLKKGFE (215 aa)) is the Radical SAM core domain.

Belongs to the radical SAM superfamily. Lipoyl synthase family. [4Fe-4S] cluster serves as cofactor.

Its subcellular location is the cytoplasm. It carries out the reaction [[Fe-S] cluster scaffold protein carrying a second [4Fe-4S](2+) cluster] + N(6)-octanoyl-L-lysyl-[protein] + 2 oxidized [2Fe-2S]-[ferredoxin] + 2 S-adenosyl-L-methionine + 4 H(+) = [[Fe-S] cluster scaffold protein] + N(6)-[(R)-dihydrolipoyl]-L-lysyl-[protein] + 4 Fe(3+) + 2 hydrogen sulfide + 2 5'-deoxyadenosine + 2 L-methionine + 2 reduced [2Fe-2S]-[ferredoxin]. The protein operates within protein modification; protein lipoylation via endogenous pathway; protein N(6)-(lipoyl)lysine from octanoyl-[acyl-carrier-protein]: step 2/2. Its function is as follows. Catalyzes the radical-mediated insertion of two sulfur atoms into the C-6 and C-8 positions of the octanoyl moiety bound to the lipoyl domains of lipoate-dependent enzymes, thereby converting the octanoylated domains into lipoylated derivatives. This is Lipoyl synthase from Bacteroides fragilis (strain ATCC 25285 / DSM 2151 / CCUG 4856 / JCM 11019 / LMG 10263 / NCTC 9343 / Onslow / VPI 2553 / EN-2).